The primary structure comprises 142 residues: Deoxyuridine 5'-triphosphate nucleotidohydrolase (142 aa).

Substrate-binding positions include 62–64, asparagine 75, and 79–81; these read RSG and TID.

It belongs to the dUTPase family. Mg(2+) is required as a cofactor.

The catalysed reaction is dUTP + H2O = dUMP + diphosphate + H(+). Its pathway is pyrimidine metabolism; dUMP biosynthesis; dUMP from dCTP (dUTP route): step 2/2. Its function is as follows. This enzyme is involved in nucleotide metabolism: it produces dUMP, the immediate precursor of thymidine nucleotides and it decreases the intracellular concentration of dUTP so that uracil cannot be incorporated into DNA. The polypeptide is Deoxyuridine 5'-triphosphate nucleotidohydrolase (Crocosphaera subtropica (strain ATCC 51142 / BH68) (Cyanothece sp. (strain ATCC 51142))).